The primary structure comprises 884 residues: MHPFSRLFRNIQSLGEEEVQELLGPPEDALPLLAGEDLNHRVADALNLHLPTADLQWVHKTNAITGLYSNQAAQFNPNWIQPEFPELHLHNDLIQKLQQYFGPLTINEKRKLQLNFPARFFPKATKYFPLIKGIKNNYPNFALEHFFATANYLWTLWEAGILYLRKNQTTLTFKGKPYSWEHRQLVQHNGQQHKSHLQSRQNSSMVACSGHLLHNHLSSESVSVSTRNLSNNISDKSQKSTRTGLCSYKQIQTDRLEHLARISCGSKIFIGQQGSSPKTLYKSISSNFRNQTWAYNSSRNSGHTTWFSSASNSNKSRSREKAYSSNSTSKRYSPPLNYEKSDFSSPGVRRRITRLDNNGTPTQCLWRSFYNTKPCGSYCIHHIVSSLDDWGPCTVTGDVTIKSPRTPRRITGGVFLVDKNPNNSSESRLVVDFSQFSRGHTRVHWPKFAVPNLQTLANLLSTNLQWLSLDVSAAFYHIPISPAAVPHLLVGSPGLERFYTCLSSSTHNRNNSQLQTMHNLCTRHVYSSLLLLFKTYGRKLHLLAHPFIMGFRKLPMGVGLSPFLLAQFTSALASMVRRNFPHCVVFAYMDDLVLGARTSEHLTAIYSHICSVFLDLGIHLNVNKTKWWGNHLHFMGYVITSSGVLPQDKHVKKISRYLHSVPVNQPLDYKICERLTGILNYVAPFTLCGYAALMPLYHAIASRMAFIFSSLYKSWLLSLYEELWPVVRQRGVVCTVFADATPTGWGIATTCQLLSGTFAFPLPIATAELIAACLARCWTGARLLGTDNSVVLSGKLTSFPWLLACVAHWILRGTSFCYVPSALNPADLPSRGLLPALRPLPRLRLRPQTSRISLWAASPPVSPRRPVRVAWSSPVQTCEPWIPP.

Residues Met-1 to Gln-184 are terminal protein domain (TP). The segment at Leu-185 to Leu-387 is spacer. The segment at Arg-299–Ser-345 is disordered. The interval Asp-388–Gln-729 is polymerase/reverse transcriptase domain (RT). The Reverse transcriptase domain maps to Asp-398–Ile-639. Mg(2+) contacts are provided by Asp-470, Asp-590, and Asp-591.

The protein belongs to the hepadnaviridae P protein family.

The enzyme catalyses DNA(n) + a 2'-deoxyribonucleoside 5'-triphosphate = DNA(n+1) + diphosphate. It carries out the reaction Endonucleolytic cleavage to 5'-phosphomonoester.. With respect to regulation, activated by host HSP70 and HSP40 in vitro to be able to bind the epsilon loop of the pgRNA. Because deletion of the RNase H region renders the protein partly chaperone-independent, the chaperones may be needed indirectly to relieve occlusion of the RNA-binding site by this domain. Inhibited by several reverse-transcriptase inhibitors: Lamivudine, Adefovir and Entecavir. Functionally, multifunctional enzyme that converts the viral RNA genome into dsDNA in viral cytoplasmic capsids. This enzyme displays a DNA polymerase activity that can copy either DNA or RNA templates, and a ribonuclease H (RNase H) activity that cleaves the RNA strand of RNA-DNA heteroduplexes in a partially processive 3'- to 5'-endonucleasic mode. Neo-synthesized pregenomic RNA (pgRNA) are encapsidated together with the P protein, and reverse-transcribed inside the nucleocapsid. Initiation of reverse-transcription occurs first by binding the epsilon loop on the pgRNA genome, and is initiated by protein priming, thereby the 5'-end of (-)DNA is covalently linked to P protein. Partial (+)DNA is synthesized from the (-)DNA template and generates the relaxed circular DNA (RC-DNA) genome. After budding and infection, the RC-DNA migrates in the nucleus, and is converted into a plasmid-like covalently closed circular DNA (cccDNA). The activity of P protein does not seem to be necessary for cccDNA generation, and is presumably released from (+)DNA by host nuclear DNA repair machinery. This Marmota monax (Woodchuck) protein is Protein P.